The following is a 520-amino-acid chain: Pantetheine hydrolase VNN2 (520 aa).

An N-terminal signal peptide occupies residues 1–22; that stretch reads MVTSSFPISVAVFALITLQVGT. The CN hydrolase domain maps to 31-306; it reads YEHAVILPNK…GKLLLSEVDS (276 aa). N-linked (GlcNAc...) asparagine glycosylation is present at Asn39. Residue Glu80 is the Proton acceptor of the active site. Lys179 acts as the Proton donor in catalysis. Cys211 functions as the Nucleophile in the catalytic mechanism. Residues Asn273, Asn347, Asn357, Asn411, and Asn468 are each glycosylated (N-linked (GlcNAc...) asparagine). Cys493 is lipidated: GPI-anchor amidated cysteine. Residues 494–520 constitute a propeptide, removed in mature form; it reads GTSNSAITYLLIFILLMIIALQNIVML.

The protein belongs to the carbon-nitrogen hydrolase superfamily. BTD/VNN family. Widely expressed with higher expression in spleen and blood.

It localises to the cell membrane. The enzyme catalyses (R)-pantetheine + H2O = cysteamine + (R)-pantothenate. In terms of biological role, amidohydrolase that hydrolyzes specifically one of the carboamide linkages in D-pantetheine thus recycling pantothenic acid (vitamin B5) and releasing cysteamine. Involved in the thymus homing of bone marrow cells. May regulate beta-2 integrin-mediated cell adhesion, migration and motility of neutrophil. In Homo sapiens (Human), this protein is Pantetheine hydrolase VNN2.